Consider the following 457-residue polypeptide: D-xylose transporter (457 aa).

10 consecutive transmembrane segments (helical) span residues 14–34 (ALGG…ILFI), 46–66 (GWVV…IGPS), 81–101 (IIFF…TLII), 104–124 (IILG…LAEL), 131–151 (GTVS…AYIT), 164–184 (WMLG…LILP), 244–264 (LIIG…TVLY), 281–301 (LLAH…AVAI), 309–329 (KIVN…SIGM), and 338–358 (AAII…ATWG). Residue glutamine 138 participates in beta-D-xylose binding. Beta-D-xylose-binding positions include 254-255 (QQ) and asparagine 260. 2 residues coordinate beta-D-xylose: tryptophan 362 and asparagine 385. The next 2 helical transmembrane spans lie at 380 to 400 (FASV…PSLL) and 402 to 422 (FFGT…SIWF).

This sequence belongs to the major facilitator superfamily. Sugar transporter (TC 2.A.1.1) family.

The protein localises to the cell membrane. Its activity is regulated as follows. Transport is inhibited by 6-deoxy-D-glucose. In terms of biological role, uptake of D-xylose across the boundary membrane with the concomitant transport of protons into the cell (symport system). Transport is driven by the proton motive force generated by either malolactic fermentation or by the metabolism of D-glucose. The sequence is that of D-xylose transporter from Levilactobacillus brevis (Lactobacillus brevis).